The following is a 181-amino-acid chain: MTFDLTNAKERMKGAQEALQRELANIRTGRANPNILNRVEVEYYGAMTPLNQVASISVPEARILLITPFDKSALEAIVHAINVSDLGLNPASDGNIVRLAIPQMTEERRKELAKEVKAEAEKAKVSVRNVRRDIMDDIKKDKDMPEDDARKAEDQTQKLTDENIKAIDEIAAEKEKELLTI.

The tract at residues 135 to 160 (MDDIKKDKDMPEDDARKAEDQTQKLT) is disordered.

It belongs to the RRF family.

The protein localises to the cytoplasm. Its function is as follows. Responsible for the release of ribosomes from messenger RNA at the termination of protein biosynthesis. May increase the efficiency of translation by recycling ribosomes from one round of translation to another. This Leuconostoc mesenteroides subsp. mesenteroides (strain ATCC 8293 / DSM 20343 / BCRC 11652 / CCM 1803 / JCM 6124 / NCDO 523 / NBRC 100496 / NCIMB 8023 / NCTC 12954 / NRRL B-1118 / 37Y) protein is Ribosome-recycling factor.